The following is a 44-amino-acid chain: Cytochrome b559 subunit beta (44 aa).

The chain crosses the membrane as a helical span at residues 19–35; it reads WLAVHTLGVPTVFFLGA. Residue H23 participates in heme binding.

Belongs to the PsbE/PsbF family. Heterodimer of an alpha subunit and a beta subunit. PSII is composed of 1 copy each of membrane proteins PsbA, PsbB, PsbC, PsbD, PsbE, PsbF, PsbH, PsbI, PsbJ, PsbK, PsbL, PsbM, PsbT, PsbX, PsbY, PsbZ, Psb30/Ycf12, peripheral proteins PsbO, CyanoQ (PsbQ), PsbU, PsbV and a large number of cofactors. It forms dimeric complexes. Heme b is required as a cofactor.

Its subcellular location is the cellular thylakoid membrane. Its function is as follows. This b-type cytochrome is tightly associated with the reaction center of photosystem II (PSII). PSII is a light-driven water:plastoquinone oxidoreductase that uses light energy to abstract electrons from H(2)O, generating O(2) and a proton gradient subsequently used for ATP formation. It consists of a core antenna complex that captures photons, and an electron transfer chain that converts photonic excitation into a charge separation. The chain is Cytochrome b559 subunit beta from Trichodesmium erythraeum (strain IMS101).